The following is a 344-amino-acid chain: Ferrochelatase (344 aa).

His-214 and Glu-295 together coordinate Fe cation.

It belongs to the ferrochelatase family.

The protein localises to the cytoplasm. It carries out the reaction heme b + 2 H(+) = protoporphyrin IX + Fe(2+). It participates in porphyrin-containing compound metabolism; protoheme biosynthesis; protoheme from protoporphyrin-IX: step 1/1. Functionally, catalyzes the ferrous insertion into protoporphyrin IX. The protein is Ferrochelatase of Rhizobium johnstonii (strain DSM 114642 / LMG 32736 / 3841) (Rhizobium leguminosarum bv. viciae).